The primary structure comprises 75 residues: uncharacterized protein (75 aa).

A helical transmembrane segment spans residues 44–64 (IINMIVIWAALIALFVKLYIL).

Its subcellular location is the host membrane. This is an uncharacterized protein from Ostreid herpesvirus 1 (isolate France) (OsHV-1).